The chain runs to 891 residues: Nitrate reductase [NAD(P)H] (891 aa).

Residues M1 to S78 are disordered. Residues L63–A76 show a composition bias toward basic and acidic residues. C168 lines the Mo-molybdopterin pocket. The Cytochrome b5 heme-binding domain maps to S515–I590. Residues H550 and H573 each coordinate heme. In terms of domain architecture, FAD-binding FR-type spans R630–A742. FAD contacts are provided by residues R682–T685, L699–Y703, F704, F711, L716–S718, and T769.

The protein belongs to the nitrate reductase family. In terms of assembly, homodimer. The cofactor is FAD. It depends on heme as a cofactor. Mo-molybdopterin serves as cofactor.

The catalysed reaction is nitrite + NAD(+) + H2O = nitrate + NADH + H(+). The enzyme catalyses nitrite + NADP(+) + H2O = nitrate + NADPH + H(+). In terms of biological role, nitrate reductase is a key enzyme involved in the first step of nitrate assimilation in plants, fungi and bacteria. This chain is Nitrate reductase [NAD(P)H] (NAR-7), found in Hordeum vulgare (Barley).